A 106-amino-acid chain; its full sequence is Large ribosomal subunit protein uL24 (106 aa).

A disordered region spans residues 69 to 106 (SNLNPVDPKTGKATRVGRKVSSEGTLVRYSKKSGEEIK).

The protein belongs to the universal ribosomal protein uL24 family. As to quaternary structure, part of the 50S ribosomal subunit.

Its function is as follows. One of two assembly initiator proteins, it binds directly to the 5'-end of the 23S rRNA, where it nucleates assembly of the 50S subunit. Functionally, one of the proteins that surrounds the polypeptide exit tunnel on the outside of the subunit. This Bacteroides fragilis (strain ATCC 25285 / DSM 2151 / CCUG 4856 / JCM 11019 / LMG 10263 / NCTC 9343 / Onslow / VPI 2553 / EN-2) protein is Large ribosomal subunit protein uL24.